We begin with the raw amino-acid sequence, 123 residues long: Cysteine proteinase inhibitor 8 (123 aa).

A signal peptide spans 1–19 (MARIPLLLALLLAVSAAAA). The 59-residue stretch at 33 to 91 (GGWSPITDVGDPHIQELGGWAVERHASLSSDGLRFRRVTSGEQQVVSGMNYRLVVSASD) folds into the Cystatin domain. A Secondary area of contact motif is present at residues 76 to 80 (QVVSG).

It belongs to the cystatin family. Phytocystatin subfamily.

The protein resides in the secreted. In terms of biological role, specific inhibitor of cysteine proteinases. Probably involved in the regulation of endogenous processes and in defense against pests and pathogens. This is Cysteine proteinase inhibitor 8 from Oryza sativa subsp. japonica (Rice).